The primary structure comprises 467 residues: MEKNTIILAAGQGTRMKSKLYKVLHQVCGKAMVDHMLTQVEKTNMDHIVTIVGHGAEKVRELLGDRTEYAIQEQQLGTGHAVLQAEKILGDKDGMTMIVSGDTPLFTAKTFENLFEYHRQKGAAATILTARTENPFSYGRIVRNEVGVVSKIVEQKDATTEEAEIKEINTGVYCFDNQKLFAALHQVKNDNAQGEYYLPDVIGIMKDAGEIVAAYEMADFSESMGVNDRLALSKATKVMQRRINEEHMVNGVTIIDPENTYIDYGVEIGPDTIIEPGVQIQGNTKIGSSSVIGAHSKIVDSTIGNRVTVTSSQIESAIMHDDSNIGPHSHLRPQAEIGEFAHVGNYCEVKNAKLGARTKMGHLSYVGDADLGTDINIGCGVVFVNYDGMNKHHSTVGDYAFIGSNSNIVAPVTIADHSYVAAGSTITNDVNKFEMGIARGRQVNKEGYFKKLPVYDAALKAEEENNK.

The tract at residues Met1–Arg229 is pyrophosphorylase. UDP-N-acetyl-alpha-D-glucosamine contacts are provided by residues Leu8–Gly11, Lys22, Gln72, Gly77–Thr78, Ser100–Asp102, Gly139, Glu154, Asn169, and Asn227. Residue Asp102 coordinates Mg(2+). Residue Asn227 coordinates Mg(2+). Residues Leu230–Asn250 are linker. Positions Gly251–Lys467 are N-acetyltransferase. 2 residues coordinate UDP-N-acetyl-alpha-D-glucosamine: Arg332 and Lys350. The Proton acceptor role is filled by His362. The UDP-N-acetyl-alpha-D-glucosamine site is built by Tyr365 and Asn376. Acetyl-CoA is bound by residues Asn385–Tyr386, Ser404, Ala422, and Arg439.

It in the N-terminal section; belongs to the N-acetylglucosamine-1-phosphate uridyltransferase family. In the C-terminal section; belongs to the transferase hexapeptide repeat family. As to quaternary structure, homotrimer. The cofactor is Mg(2+).

It localises to the cytoplasm. The enzyme catalyses alpha-D-glucosamine 1-phosphate + acetyl-CoA = N-acetyl-alpha-D-glucosamine 1-phosphate + CoA + H(+). It carries out the reaction N-acetyl-alpha-D-glucosamine 1-phosphate + UTP + H(+) = UDP-N-acetyl-alpha-D-glucosamine + diphosphate. Its pathway is nucleotide-sugar biosynthesis; UDP-N-acetyl-alpha-D-glucosamine biosynthesis; N-acetyl-alpha-D-glucosamine 1-phosphate from alpha-D-glucosamine 6-phosphate (route II): step 2/2. The protein operates within nucleotide-sugar biosynthesis; UDP-N-acetyl-alpha-D-glucosamine biosynthesis; UDP-N-acetyl-alpha-D-glucosamine from N-acetyl-alpha-D-glucosamine 1-phosphate: step 1/1. It participates in bacterial outer membrane biogenesis; LPS lipid A biosynthesis. Functionally, catalyzes the last two sequential reactions in the de novo biosynthetic pathway for UDP-N-acetylglucosamine (UDP-GlcNAc). The C-terminal domain catalyzes the transfer of acetyl group from acetyl coenzyme A to glucosamine-1-phosphate (GlcN-1-P) to produce N-acetylglucosamine-1-phosphate (GlcNAc-1-P), which is converted into UDP-GlcNAc by the transfer of uridine 5-monophosphate (from uridine 5-triphosphate), a reaction catalyzed by the N-terminal domain. The protein is Bifunctional protein GlmU of Pediococcus pentosaceus (strain ATCC 25745 / CCUG 21536 / LMG 10740 / 183-1w).